Here is a 304-residue protein sequence, read N- to C-terminus: RNA polymerase II holoenzyme cyclin-like subunit (304 aa).

Residues 43–174 (TIHDSKANKQ…LIEELQSYLI (132 aa)) form the Cyclin N-terminal domain.

The protein belongs to the cyclin family. Cyclin C subfamily. In terms of assembly, component of the SRB8-11 complex, a regulatory module of the Mediator complex.

The protein localises to the nucleus. Its function is as follows. Component of the SRB8-11 complex. The SRB8-11 complex is a regulatory module of the Mediator complex which is itself involved in regulation of basal and activated RNA polymerase II-dependent transcription. The SRB8-11 complex may be involved in the transcriptional repression of a subset of genes regulated by Mediator. It may inhibit the association of the Mediator complex with RNA polymerase II to form the holoenzyme complex. The SRB8-11 complex phosphorylates the C-terminal domain (CTD) of the largest subunit of RNA polymerase II. The protein is RNA polymerase II holoenzyme cyclin-like subunit (SSN8) of Kluyveromyces lactis (strain ATCC 8585 / CBS 2359 / DSM 70799 / NBRC 1267 / NRRL Y-1140 / WM37) (Yeast).